A 512-amino-acid polypeptide reads, in one-letter code: Glutathione-binding protein GsiB (512 aa).

The first 26 residues, 1 to 26 (MARAVHRSGLVALGIATALMASCAFA), serve as a signal peptide directing secretion.

Belongs to the bacterial solute-binding protein 5 family. As to quaternary structure, the complex is composed of two ATP-binding proteins (GsiA), two transmembrane proteins (GsiC and GsiD) and a solute-binding protein (GsiB).

The protein resides in the periplasm. In terms of biological role, part of the ABC transporter complex GsiABCD involved in glutathione import. Binds glutathione. This is Glutathione-binding protein GsiB from Shigella flexneri.